We begin with the raw amino-acid sequence, 539 residues long: CTP synthase (539 aa).

An amidoligase domain region spans residues 1-267 (MTKYIFVTGG…DQKVVDFLHI (267 aa)). Serine 13 is a binding site for CTP. UTP is bound at residue serine 13. 14–19 (SLGKGI) contributes to the ATP binding site. Tyrosine 54 contributes to the L-glutamine binding site. Position 71 (aspartate 71) interacts with ATP. Positions 71 and 141 each coordinate Mg(2+). CTP is bound by residues 148 to 150 (DME), 188 to 193 (KSKPTQ), and lysine 224. UTP-binding positions include 188–193 (KSKPTQ) and lysine 224. The Glutamine amidotransferase type-1 domain maps to 294–537 (KITLVGKYVE…IGAASGLQVD (244 aa)). Glycine 356 contacts L-glutamine. The active-site Nucleophile; for glutamine hydrolysis is cysteine 383. L-glutamine is bound by residues 384–387 (LGMQ), glutamate 407, and arginine 465. Catalysis depends on residues histidine 510 and glutamate 512.

Belongs to the CTP synthase family. As to quaternary structure, homotetramer.

It carries out the reaction UTP + L-glutamine + ATP + H2O = CTP + L-glutamate + ADP + phosphate + 2 H(+). The enzyme catalyses L-glutamine + H2O = L-glutamate + NH4(+). The catalysed reaction is UTP + NH4(+) + ATP = CTP + ADP + phosphate + 2 H(+). It functions in the pathway pyrimidine metabolism; CTP biosynthesis via de novo pathway; CTP from UDP: step 2/2. Allosterically activated by GTP, when glutamine is the substrate; GTP has no effect on the reaction when ammonia is the substrate. The allosteric effector GTP functions by stabilizing the protein conformation that binds the tetrahedral intermediate(s) formed during glutamine hydrolysis. Inhibited by the product CTP, via allosteric rather than competitive inhibition. Catalyzes the ATP-dependent amination of UTP to CTP with either L-glutamine or ammonia as the source of nitrogen. Regulates intracellular CTP levels through interactions with the four ribonucleotide triphosphates. In Lactobacillus delbrueckii subsp. bulgaricus (strain ATCC 11842 / DSM 20081 / BCRC 10696 / JCM 1002 / NBRC 13953 / NCIMB 11778 / NCTC 12712 / WDCM 00102 / Lb 14), this protein is CTP synthase.